We begin with the raw amino-acid sequence, 536 residues long: Formate--tetrahydrofolate ligase (536 aa).

Thr51 to Thr58 is a binding site for ATP.

This sequence belongs to the formate--tetrahydrofolate ligase family.

The enzyme catalyses (6S)-5,6,7,8-tetrahydrofolate + formate + ATP = (6R)-10-formyltetrahydrofolate + ADP + phosphate. The protein operates within one-carbon metabolism; tetrahydrofolate interconversion. In Thermoplasma volcanium (strain ATCC 51530 / DSM 4299 / JCM 9571 / NBRC 15438 / GSS1), this protein is Formate--tetrahydrofolate ligase.